Consider the following 495-residue polypeptide: Genome polyprotein (495 aa).

Residues 1-445 (MRCIGISNRD…LNQVFGTIYG (445 aa)) are Extracellular-facing. Disulfide bonds link C3–C30, C60–C121, C74–C105, and C92–C116. A glycan (N-linked (GlcNAc...) asparagine; by host) is linked at N67. The fusion peptide stretch occupies residues 98–111 (DRGWGNGCGLFGKG). N-linked (GlcNAc...) asparagine; by host glycosylation is present at N153. 2 cysteine pairs are disulfide-bonded: C185–C285 and C302–C333. A helical membrane pass occupies residues 446–466 (AAFSGVSWTMKILIGVIITCI). Topologically, residues 467-472 (GMNSRS) are cytoplasmic. A helical transmembrane segment spans residues 473-493 (TSLSVSLVLVGVVTLYLGGMV). Topologically, residues 494–495 (HA) are extracellular.

In terms of assembly, homodimer; in the endoplasmic reticulum and Golgi. Interacts with protein prM. Interacts with non-structural protein 1. Post-translationally, N-glycosylated. In terms of processing, specific enzymatic cleavages in vivo yield mature proteins. Cleavages in the lumen of endoplasmic reticulum are performed by host signal peptidase, wereas cleavages in the cytoplasmic side are performed by serine protease NS3. Signal cleavage at the 2K-4B site requires a prior NS3 protease-mediated cleavage at the 4A-2K site.

The protein resides in the virion membrane. Its subcellular location is the host endoplasmic reticulum membrane. Its function is as follows. Binds to host cell surface receptor and mediates fusion between viral and cellular membranes. Envelope protein is synthesized in the endoplasmic reticulum in the form of heterodimer with protein prM. They play a role in virion budding in the ER, and the newly formed immature particle is covered with 60 spikes composed of heterodimer between precursor prM and envelope protein E. The virion is transported to the Golgi apparatus where the low pH causes dissociation of PrM-E heterodimers and formation of E homodimers. prM-E cleavage is inefficient, and many virions are only partially matured. These uncleaved prM would play a role in immune evasion. The polypeptide is Genome polyprotein (Aedes aegypti (Yellowfever mosquito)).